The following is a 103-amino-acid chain: Small ribosomal subunit protein uS10 (103 aa).

It belongs to the universal ribosomal protein uS10 family. In terms of assembly, part of the 30S ribosomal subunit.

Its function is as follows. Involved in the binding of tRNA to the ribosomes. The polypeptide is Small ribosomal subunit protein uS10 (Acinetobacter baylyi (strain ATCC 33305 / BD413 / ADP1)).